The primary structure comprises 291 residues: Protein/nucleic acid deglycase HchA (291 aa).

Over residues M1–H18 the composition is skewed to basic and acidic residues. The tract at residues M1–S24 is disordered. C188 functions as the Nucleophile in the catalytic mechanism.

This sequence belongs to the peptidase C56 family. HchA subfamily.

The protein localises to the cytoplasm. The enzyme catalyses N(omega)-(1-hydroxy-2-oxopropyl)-L-arginyl-[protein] + H2O = lactate + L-arginyl-[protein] + H(+). The catalysed reaction is N(6)-(1-hydroxy-2-oxopropyl)-L-lysyl-[protein] + H2O = lactate + L-lysyl-[protein] + H(+). It catalyses the reaction S-(1-hydroxy-2-oxopropyl)-L-cysteinyl-[protein] + H2O = lactate + L-cysteinyl-[protein] + H(+). It carries out the reaction N(omega)-(1-hydroxy-2-oxoethyl)-L-arginyl-[protein] + H2O = L-arginyl-[protein] + glycolate + H(+). The enzyme catalyses N(6)-(1-hydroxy-2-oxoethyl)-L-lysyl-[protein] + H2O = glycolate + L-lysyl-[protein] + H(+). The catalysed reaction is S-(1-hydroxy-2-oxoethyl)-L-cysteinyl-[protein] + H2O = glycolate + L-cysteinyl-[protein] + H(+). It catalyses the reaction N(2)-(1-hydroxy-2-oxopropyl)-dGTP + H2O = lactate + dGTP + H(+). It carries out the reaction N(2)-(1-hydroxy-2-oxopropyl)-GTP + H2O = lactate + GTP + H(+). The enzyme catalyses N(2)-(1-hydroxy-2-oxopropyl)-GDP + H2O = lactate + GDP + H(+). The catalysed reaction is N(2)-(1-hydroxy-2-oxopropyl)-GMP + H2O = lactate + GMP + H(+). It catalyses the reaction N(2)-(1-hydroxy-2-oxoethyl)-dGTP + H2O = dGTP + glycolate + H(+). It carries out the reaction N(2)-(1-hydroxy-2-oxoethyl)-GTP + H2O = glycolate + GTP + H(+). The enzyme catalyses N(2)-(1-hydroxy-2-oxoethyl)-GDP + H2O = glycolate + GDP + H(+). The catalysed reaction is N(2)-(1-hydroxy-2-oxoethyl)-GMP + H2O = glycolate + GMP + H(+). It catalyses the reaction an N(2)-(1-hydroxy-2-oxopropyl)-guanosine in RNA + H2O = a guanosine in RNA + lactate + H(+). It carries out the reaction an N(2)-(1-hydroxy-2-oxopropyl)-2'-deoxyguanosine in DNA + H2O = a 2'-deoxyguanosine in DNA + lactate + H(+). The enzyme catalyses an N(2)-(1-hydroxy-2-oxoethyl)-guanosine in RNA + H2O = a guanosine in RNA + glycolate + H(+). The catalysed reaction is an N(2)-(1-hydroxy-2-oxoethyl)-2'-deoxyguanosine in DNA + H2O = a 2'-deoxyguanosine in DNA + glycolate + H(+). Protein and nucleotide deglycase that catalyzes the deglycation of the Maillard adducts formed between amino groups of proteins or nucleotides and reactive carbonyl groups of glyoxals. Thus, functions as a protein deglycase that repairs methylglyoxal- and glyoxal-glycated proteins, and releases repaired proteins and lactate or glycolate, respectively. Deglycates cysteine, arginine and lysine residues in proteins, and thus reactivates these proteins by reversing glycation by glyoxals. Acts on early glycation intermediates (hemithioacetals and aminocarbinols), preventing the formation of Schiff bases and advanced glycation endproducts (AGE). Also functions as a nucleotide deglycase able to repair glycated guanine in the free nucleotide pool (GTP, GDP, GMP, dGTP) and in DNA and RNA. Is thus involved in a major nucleotide repair system named guanine glycation repair (GG repair), dedicated to reversing methylglyoxal and glyoxal damage via nucleotide sanitization and direct nucleic acid repair. Plays an important role in protecting cells from carbonyl stress. The polypeptide is Protein/nucleic acid deglycase HchA (Pseudomonas aeruginosa (strain UCBPP-PA14)).